Consider the following 327-residue polypeptide: Aspartate--ammonia ligase (327 aa).

It belongs to the class-II aminoacyl-tRNA synthetase family. AsnA subfamily.

It is found in the cytoplasm. The enzyme catalyses L-aspartate + NH4(+) + ATP = L-asparagine + AMP + diphosphate + H(+). It participates in amino-acid biosynthesis; L-asparagine biosynthesis; L-asparagine from L-aspartate (ammonia route): step 1/1. The protein is Aspartate--ammonia ligase of Bacillus anthracis (strain A0248).